A 360-amino-acid chain; its full sequence is Photosystem II protein D1 (360 aa).

A run of 3 helical transmembrane segments spans residues 30-47 (YVGWFGVLMIPCLLAATT), 119-134 (HFLIGISAYMGRQWEL), and 143-157 (WICVAYSAPVSAAFA). Histidine 119 contributes to the chlorophyll a binding site. Tyrosine 127 provides a ligand contact to pheophytin a. The [CaMn4O5] cluster site is built by aspartate 171 and glutamate 190. The chain crosses the membrane as a helical span at residues 198–219 (FHMAGVAGMFGGALFSAMHGSL). A chlorophyll a-binding site is contributed by histidine 199. Residues histidine 216 and 265–266 (SF) contribute to the a quinone site. A Fe cation-binding site is contributed by histidine 216. Residue histidine 273 coordinates Fe cation. Residues 275-289 (FLASWPVICVWLTSM) form a helical membrane-spanning segment. Histidine 333, glutamate 334, aspartate 343, and alanine 345 together coordinate [CaMn4O5] cluster. Positions 346-360 (AAESTSVALVAPAIG) are excised as a propeptide.

The protein belongs to the reaction center PufL/M/PsbA/D family. PSII is composed of 1 copy each of membrane proteins PsbA, PsbB, PsbC, PsbD, PsbE, PsbF, PsbH, PsbI, PsbJ, PsbK, PsbL, PsbM, PsbT, PsbX, PsbY, Psb30/Ycf12, peripheral proteins PsbO, CyanoQ (PsbQ), PsbU, PsbV and a large number of cofactors. It forms dimeric complexes. Requires The D1/D2 heterodimer binds P680, chlorophylls that are the primary electron donor of PSII, and subsequent electron acceptors. It shares a non-heme iron and each subunit binds pheophytin, quinone, additional chlorophylls, carotenoids and lipids. D1 provides most of the ligands for the Mn4-Ca-O5 cluster of the oxygen-evolving complex (OEC). There is also a Cl(-1) ion associated with D1 and D2, which is required for oxygen evolution. The PSII complex binds additional chlorophylls, carotenoids and specific lipids. as cofactor. In terms of processing, tyr-162 forms a radical intermediate that is referred to as redox-active TyrZ, YZ or Y-Z. Post-translationally, C-terminally processed by CtpA; processing is essential to allow assembly of the oxygen-evolving complex and thus photosynthetic growth.

The protein localises to the cellular thylakoid membrane. It catalyses the reaction 2 a plastoquinone + 4 hnu + 2 H2O = 2 a plastoquinol + O2. Its function is as follows. Photosystem II (PSII) is a light-driven water:plastoquinone oxidoreductase that uses light energy to abstract electrons from H(2)O, generating O(2) and a proton gradient subsequently used for ATP formation. It consists of a core antenna complex that captures photons, and an electron transfer chain that converts photonic excitation into a charge separation. The D1/D2 (PsbA/PsbD) reaction center heterodimer binds P680, the primary electron donor of PSII as well as several subsequent electron acceptors. The sequence is that of Photosystem II protein D1 from Prochlorococcus marinus (strain NATL1A).